The chain runs to 468 residues: Transmembrane protein 151A (468 aa).

Residues 1–20 form a disordered region; that stretch reads MPEGEGGDCGEVPALVPDGE. The next 2 membrane-spanning stretches (helical) occupy residues 45–65 and 98–118; these read CLLL…CRLA and YLYI…AECW. The tract at residues 384 to 438 is disordered; that stretch reads VSSNSLPPARPSGPRLPFSRSRLSLGAGGRTTPGVFRSLSGGPLGRRGEDTEPLE.

The protein belongs to the TMEM151 family. Highly expressed in the central nervous system (CNS) including the cerebral cortex, hippocampus, spinal cord, brainstem, and thalamus. Expression is relatively low during postnatal stages but highly expressed at postnatal day 14 (P14), and declined in adulthood. Also expressed in the stomach, heart, liver, spleen, lung, kidney, and muscle.

It localises to the endoplasmic reticulum membrane. Its subcellular location is the cell projection. It is found in the axon. The protein localises to the dendrite. The chain is Transmembrane protein 151A (Tmem151a) from Mus musculus (Mouse).